A 128-amino-acid polypeptide reads, in one-letter code: Small ribosomal subunit protein uS11 (128 aa).

It belongs to the universal ribosomal protein uS11 family. In terms of assembly, part of the 30S ribosomal subunit. Interacts with proteins S7 and S18. Binds to IF-3.

Located on the platform of the 30S subunit, it bridges several disparate RNA helices of the 16S rRNA. Forms part of the Shine-Dalgarno cleft in the 70S ribosome. This Chloroherpeton thalassium (strain ATCC 35110 / GB-78) protein is Small ribosomal subunit protein uS11.